The sequence spans 44 residues: Mu-conotoxin-like Cal 12.1.2h (44 aa).

4 disulfide bridges follow: cysteine 3/cysteine 16, cysteine 11/cysteine 28, cysteine 18/cysteine 33, and cysteine 27/cysteine 38. Position 17 is a 6'-bromotryptophan (tryptophan 17). Proline 23 bears the 4-hydroxyproline mark. 6'-bromotryptophan is present on residues tryptophan 36 and tryptophan 37. Proline 39 carries the 4-hydroxyproline modification. At tryptophan 43 the chain carries 6'-bromotryptophan.

In terms of tissue distribution, expressed by the venom duct.

It is found in the secreted. In terms of biological role, mu-conotoxins block voltage-gated sodium channels. This toxin reversibly blocks voltage-gated sodium channel in cephalopods, with no alteration in the voltage dependence of sodium conductance or on the kinetics of inactivation. This chain is Mu-conotoxin-like Cal 12.1.2h, found in Californiconus californicus (California cone).